A 255-amino-acid polypeptide reads, in one-letter code: Small ribosomal subunit protein uS2 (255 aa).

The disordered stretch occupies residues 231–255 (RLQTGAEEEFSTEGEEVVEETPAEA). Residues 236 to 255 (AEEEFSTEGEEVVEETPAEA) are compositionally biased toward acidic residues.

Belongs to the universal ribosomal protein uS2 family.

The protein is Small ribosomal subunit protein uS2 of Geobacter sp. (strain M21).